The sequence spans 170 residues: UPF0161 protein At3g09310 (170 aa).

Disordered stretches follow at residues 49 to 70 and 147 to 170; these read CLSAKSTPSKPDPASPQDGEEL and SGIKLREGDEEEEDNYDDEDQRKI. A compositionally biased stretch (acidic residues) spans 154–170; sequence GDEEEEDNYDDEDQRKI.

It belongs to the UPF0161 family.

In Arabidopsis thaliana (Mouse-ear cress), this protein is UPF0161 protein At3g09310.